The sequence spans 347 residues: Extracellular metalloprotease (347 aa).

Residues methionine 1–alanine 20 form the signal peptide. The disordered stretch occupies residues serine 43–glutamine 68. Histidine 162 contributes to the Zn(2+) binding site. The active site involves glutamate 163. The Zn(2+) site is built by histidine 166 and glutamate 186. Histidine 264 functions as the Proton donor in the catalytic mechanism.

It belongs to the peptidase M4 family. The cofactor is Ca(2+). It depends on Zn(2+) as a cofactor.

The protein resides in the secreted. This chain is Extracellular metalloprotease (prt1), found in Pectobacterium carotovorum subsp. carotovorum (Erwinia carotovora subsp. carotovora).